The sequence spans 338 residues: Phenylalanine--tRNA ligase alpha subunit (338 aa).

Glu252 contacts Mg(2+).

The protein belongs to the class-II aminoacyl-tRNA synthetase family. Phe-tRNA synthetase alpha subunit type 1 subfamily. As to quaternary structure, tetramer of two alpha and two beta subunits. Mg(2+) is required as a cofactor.

The protein resides in the cytoplasm. It carries out the reaction tRNA(Phe) + L-phenylalanine + ATP = L-phenylalanyl-tRNA(Phe) + AMP + diphosphate + H(+). In Pseudomonas syringae pv. syringae (strain B728a), this protein is Phenylalanine--tRNA ligase alpha subunit.